We begin with the raw amino-acid sequence, 202 residues long: ATP-dependent Clp protease proteolytic subunit (202 aa).

Serine 106 (nucleophile) is an active-site residue. Histidine 131 is a catalytic residue.

This sequence belongs to the peptidase S14 family. In terms of assembly, fourteen ClpP subunits assemble into 2 heptameric rings which stack back to back to give a disk-like structure with a central cavity, resembling the structure of eukaryotic proteasomes.

It is found in the cytoplasm. It carries out the reaction Hydrolysis of proteins to small peptides in the presence of ATP and magnesium. alpha-casein is the usual test substrate. In the absence of ATP, only oligopeptides shorter than five residues are hydrolyzed (such as succinyl-Leu-Tyr-|-NHMec, and Leu-Tyr-Leu-|-Tyr-Trp, in which cleavage of the -Tyr-|-Leu- and -Tyr-|-Trp bonds also occurs).. Its function is as follows. Cleaves peptides in various proteins in a process that requires ATP hydrolysis. Has a chymotrypsin-like activity. Plays a major role in the degradation of misfolded proteins. The protein is ATP-dependent Clp protease proteolytic subunit of Paracidovorax citrulli (strain AAC00-1) (Acidovorax citrulli).